A 340-amino-acid polypeptide reads, in one-letter code: Sodium/bile acid cotransporter 7 (340 aa).

The Cytoplasmic segment spans residues 1 to 10 (MRLLERVRKE). A helical transmembrane segment spans residues 11-31 (WFMVGIVVAIGAAKLEPSVGV). At 32–37 (NGGPLK) the chain is on the extracellular side. Residues 38 to 58 (PEITVSYIAVATIFFNSGLSL) form a helical membrane-spanning segment. At 59–71 (KTEELTSALVHLK) the chain is on the cytoplasmic side. A helical transmembrane segment spans residues 72–92 (LHLFIQVFTLAFFPTTIWLFL). The Extracellular segment spans residues 93–116 (QLLSVTSINEWLLKGLQTVGCMPP). A helical membrane pass occupies residues 117–137 (PVSSAVILTKAVGGNEAAAIF). A topological domain (cytoplasmic) is located at residue asparagine 138. The chain crosses the membrane as a helical span at residues 139–159 (SAFGSFLGIVVTPVLLLLFLG). Over 160-163 (SSSS) the chain is Extracellular. Residues 164-184 (VPFTSIFSQLFMTVVVPLVIG) traverse the membrane as a helical segment. Over 185–201 (QIVRRYIKDWLERKKPP) the chain is Cytoplasmic. The helical transmembrane segment at 202–222 (FGVVSSSVLLMIIYTTFCDTF) threads the bilayer. Residues 223–234 (SNPNIDLDKFSL) are Extracellular-facing. A helical transmembrane segment spans residues 235–255 (ILILFIIVSIQLSFMLLTFVF). Residues 256–270 (STRNNSGFTPADTVA) are Cytoplasmic-facing. A helical transmembrane segment spans residues 271 to 291 (IIFCSTHKSLTLGIPMLKIVF). The Extracellular portion of the chain corresponds to 292–298 (AGHEHLS). A helical transmembrane segment spans residues 299 to 319 (LISLPLLIYHPAQILLGSVLV). Residues 320-340 (PTIKSWMVSRQKGVKLTRPTV) are Cytoplasmic-facing.

The protein belongs to the bile acid:sodium symporter (BASS) (TC 2.A.28) family. In terms of tissue distribution, strongly expressed in liver, adrenal gland, small intestine and colon. Moderately expressed in heart, lung, kidney and spleen. Weakly expressed in brain.

It is found in the cell membrane. The protein localises to the endoplasmic reticulum membrane. It localises to the golgi apparatus membrane. In terms of biological role, involved in teeth and skeletal development. Has an essential role in the biosynthesis and trafficking of glycosaminoglycans and glycoproteins to produce a proper functioning extracellular matrix. Required for extracellular matrix mineralization. Also involved in the regulation of cellular calcium homeostasis. Does not show transport activity towards bile acids or steroid sulfates (including taurocholate, cholate, chenodeoxycholate, estrone-3-sulfate, dehydroepiandrosterone sulfate (DHEAS) and pregnenolone sulfate). This Rattus norvegicus (Rat) protein is Sodium/bile acid cotransporter 7 (Slc10a7).